The following is a 142-amino-acid chain: Large ribosomal subunit protein uL16 (142 aa).

The protein belongs to the universal ribosomal protein uL16 family. As to quaternary structure, part of the 50S ribosomal subunit.

Its function is as follows. Binds 23S rRNA and is also seen to make contacts with the A and possibly P site tRNAs. This is Large ribosomal subunit protein uL16 from Thermosipho africanus (strain TCF52B).